Here is a 347-residue protein sequence, read N- to C-terminus: MLQYNQSPHMPQDPSLHSKFQMSSSAPIEISFQMHQEPARNLPFQMCQSPLVIPRSPMQSSHSVPERDLCPQESQGPSGKSSIQMQPGLVMDPALPILRSLLMHSPHQIPSRSSVRAGFQGSLGPMVRSPSYGDRRVSLVTPRKHRKIRTVYTEEQKCVLKKHFHKCTYPSREQRMALAVLVGVTANEIQIWFKNHRAKSKRESLQNVPAALPETNGSSEAVSESVHFPDSLPVVASANGESMWSGTFGEDSIPNLNWSQESSPPHYQACDSARYCPQEYLLNGHAPVTAWNSGQSVAVEVQTGLAVAEAPVVMVASTQGPEYAQDSGPSTEELWQRVLEDFDELGD.

2 disordered regions span residues 1 to 20 (MLQY…HSKF) and 54 to 86 (PRSP…IQMQ). Over residues 72–85 (QESQGPSGKSSIQM) the composition is skewed to polar residues. Residues 145–204 (HRKIRTVYTEEQKCVLKKHFHKCTYPSREQRMALAVLVGVTANEIQIWFKNHRAKSKRES) constitute a DNA-binding region (homeobox).

It belongs to the paired homeobox family. Obox subfamily. Specifically expressed in early embryos.

It is found in the nucleus. Its function is as follows. Transcription factor required for zygotic genome activation (ZGA), a critical event in early embryonic development during which the developmental control passes from maternally provided mRNAs to the expression of the zygotic genome after fertilization. The chain is Oocyte-specific homeobox protein 6 from Mus musculus (Mouse).